A 223-amino-acid chain; its full sequence is MTTQDELKRIAAEKAVEFVPENEYIGIGTGSTINFFIEALGKSGKKIKGAVSTSKKSSELLAQYDIPVVSLNEVSGLAVYIDGADEVNHALQMIKGGGGAHLNEKIVASASEKFVCIADESKYVSRLGKFPLPVEVVESARSLVSRKLLAMGGQPELRIGYTTFYGNQIVDVHGLNIDQPLTMEDEINKITGVLENGIFARDAADVLILGTEEGAKVIYPCQG.

Residues 29–32 (TGST), 82–85 (DGAD), and 95–98 (KGGG) each bind substrate. Glu-104 acts as the Proton acceptor in catalysis. Substrate is bound at residue Lys-122.

It belongs to the ribose 5-phosphate isomerase family. In terms of assembly, homodimer.

It carries out the reaction aldehydo-D-ribose 5-phosphate = D-ribulose 5-phosphate. The protein operates within carbohydrate degradation; pentose phosphate pathway; D-ribose 5-phosphate from D-ribulose 5-phosphate (non-oxidative stage): step 1/1. Its function is as follows. Catalyzes the reversible conversion of ribose-5-phosphate to ribulose 5-phosphate. In Neisseria meningitidis serogroup C (strain 053442), this protein is Ribose-5-phosphate isomerase A.